A 325-amino-acid chain; its full sequence is Glutarate 2-hydroxylase (325 aa).

His-160, Asp-162, and His-292 together coordinate Fe cation.

It belongs to the glutarate hydroxylase family. As to quaternary structure, homotetramer. The cofactor is Fe(2+).

It catalyses the reaction glutarate + 2-oxoglutarate + O2 = (S)-2-hydroxyglutarate + succinate + CO2. It functions in the pathway amino-acid degradation. Acts as an alpha-ketoglutarate-dependent dioxygenase catalyzing hydroxylation of glutarate (GA) to L-2-hydroxyglutarate (L2HG). Functions in a L-lysine degradation pathway that proceeds via cadaverine, glutarate and L-2-hydroxyglutarate. The protein is Glutarate 2-hydroxylase of Escherichia coli O17:K52:H18 (strain UMN026 / ExPEC).